The following is a 294-amino-acid chain: 4-hydroxy-tetrahydrodipicolinate synthase (294 aa).

Thr47 is a binding site for pyruvate. The Proton donor/acceptor role is filled by Tyr135. Catalysis depends on Lys163, which acts as the Schiff-base intermediate with substrate. Position 205 (Thr205) interacts with pyruvate.

The protein belongs to the DapA family. As to quaternary structure, homotetramer; dimer of dimers.

Its subcellular location is the cytoplasm. The enzyme catalyses L-aspartate 4-semialdehyde + pyruvate = (2S,4S)-4-hydroxy-2,3,4,5-tetrahydrodipicolinate + H2O + H(+). The protein operates within amino-acid biosynthesis; L-lysine biosynthesis via DAP pathway; (S)-tetrahydrodipicolinate from L-aspartate: step 3/4. Catalyzes the condensation of (S)-aspartate-beta-semialdehyde [(S)-ASA] and pyruvate to 4-hydroxy-tetrahydrodipicolinate (HTPA). This chain is 4-hydroxy-tetrahydrodipicolinate synthase, found in Rickettsia africae (strain ESF-5).